Here is a 428-residue protein sequence, read N- to C-terminus: Enolase 1 (428 aa).

Residue glutamine 167 participates in (2R)-2-phosphoglycerate binding. Glutamate 209 functions as the Proton donor in the catalytic mechanism. 3 residues coordinate Mg(2+): aspartate 246, glutamate 288, and aspartate 315. Residues lysine 340, arginine 369, serine 370, and lysine 391 each coordinate (2R)-2-phosphoglycerate. Lysine 340 acts as the Proton acceptor in catalysis.

The protein belongs to the enolase family. As to quaternary structure, component of the RNA degradosome, a multiprotein complex involved in RNA processing and mRNA degradation. It depends on Mg(2+) as a cofactor.

Its subcellular location is the cytoplasm. It localises to the secreted. The protein localises to the cell surface. It catalyses the reaction (2R)-2-phosphoglycerate = phosphoenolpyruvate + H2O. It functions in the pathway carbohydrate degradation; glycolysis; pyruvate from D-glyceraldehyde 3-phosphate: step 4/5. Functionally, catalyzes the reversible conversion of 2-phosphoglycerate (2-PG) into phosphoenolpyruvate (PEP). It is essential for the degradation of carbohydrates via glycolysis. The chain is Enolase 1 from Pseudomonas syringae pv. tomato (strain ATCC BAA-871 / DC3000).